The chain runs to 283 residues: Elongation factor Ts (283 aa).

The involved in Mg(2+) ion dislocation from EF-Tu stretch occupies residues 80-83; sequence TDFV.

This sequence belongs to the EF-Ts family.

The protein localises to the cytoplasm. Associates with the EF-Tu.GDP complex and induces the exchange of GDP to GTP. It remains bound to the aminoacyl-tRNA.EF-Tu.GTP complex up to the GTP hydrolysis stage on the ribosome. The chain is Elongation factor Ts from Erwinia tasmaniensis (strain DSM 17950 / CFBP 7177 / CIP 109463 / NCPPB 4357 / Et1/99).